The sequence spans 295 residues: MPQFFLNKRLIILLISIIVLVALVGFSLRDRENASWPEQFVKDVVGFGENIVAKPTSFISGAVDGVVDLKNTYTENQHLKERLEELAQLESEVADLKKENKDLKESLDITDSIRDYDPLNASVISRNPTNWNDQVEIDKGSSDGVKPDMAVTTPSGLIGKVTTTGAKSATVELLTSSDVKNRVSAKVQGKENAFGIINGYDSDTKLLELKQLPYDMKFKKGQKVVTSGLGGKFPAGIFIGTIEKVETDKMGLSQTAFIKPGADMYDLNHVTVLKRSAEAGTTDDDTTSSDTTGGQ.

An N-terminal signal peptide occupies residues 1–34 (MPQFFLNKRLIILLISIIVLVALVGFSLRDRENA). Positions 66-112 (VVDLKNTYTENQHLKERLEELAQLESEVADLKKENKDLKESLDITDS) form a coiled coil. Positions 276 to 295 (SAEAGTTDDDTTSSDTTGGQ) are disordered.

It belongs to the MreC family. As to quaternary structure, homooligomer of 24 subunits, arranged as 12 dimers.

Functionally, involved in formation and maintenance of cell shape. The sequence is that of Cell shape-determining protein MreC from Listeria monocytogenes serovar 1/2a (strain ATCC BAA-679 / EGD-e).